The following is a 30-amino-acid chain: U-actitoxin-Bcg2a (30 aa).

C7 and C27 form a disulfide bridge.

Its subcellular location is the secreted. It localises to the nematocyst. Its function is as follows. Possible voltage-gated potassium channel (Kv) blocker. This chain is U-actitoxin-Bcg2a, found in Bunodosoma cangicum (Sea anemone).